We begin with the raw amino-acid sequence, 428 residues long: Citrate synthase (428 aa).

Catalysis depends on residues His-265, His-306, and Asp-363.

It belongs to the citrate synthase family. In terms of assembly, homohexamer.

It carries out the reaction oxaloacetate + acetyl-CoA + H2O = citrate + CoA + H(+). It functions in the pathway carbohydrate metabolism; tricarboxylic acid cycle; isocitrate from oxaloacetate: step 1/2. Allosterically inhibited by NADH. The chain is Citrate synthase (gltA) from Pseudomonas aeruginosa (strain ATCC 15692 / DSM 22644 / CIP 104116 / JCM 14847 / LMG 12228 / 1C / PRS 101 / PAO1).